The chain runs to 284 residues: Tryptophan 2,3-dioxygenase (284 aa).

Substrate-binding positions include 53–57 (FIVQH), Tyr115, and Arg119. Residue His242 coordinates heme. Thr256 contacts substrate.

The protein belongs to the tryptophan 2,3-dioxygenase family. In terms of assembly, homotetramer. Heme is required as a cofactor.

The enzyme catalyses L-tryptophan + O2 = N-formyl-L-kynurenine. It functions in the pathway amino-acid degradation; L-tryptophan degradation via kynurenine pathway; L-kynurenine from L-tryptophan: step 1/2. Heme-dependent dioxygenase that catalyzes the oxidative cleavage of the L-tryptophan (L-Trp) pyrrole ring and converts L-tryptophan to N-formyl-L-kynurenine. Catalyzes the oxidative cleavage of the indole moiety. The sequence is that of Tryptophan 2,3-dioxygenase from Bordetella pertussis (strain Tohama I / ATCC BAA-589 / NCTC 13251).